Here is a 232-residue protein sequence, read N- to C-terminus: Flagellar L-ring protein (232 aa).

A signal peptide spans 1 to 21 (MQKNAAHTYAISSLLVLSLTG). Cysteine 22 is lipidated: N-palmitoyl cysteine. The S-diacylglycerol cysteine moiety is linked to residue cysteine 22.

This sequence belongs to the FlgH family. The basal body constitutes a major portion of the flagellar organelle and consists of four rings (L,P,S, and M) mounted on a central rod.

The protein resides in the cell outer membrane. The protein localises to the bacterial flagellum basal body. Assembles around the rod to form the L-ring and probably protects the motor/basal body from shearing forces during rotation. The polypeptide is Flagellar L-ring protein (Shigella boydii serotype 18 (strain CDC 3083-94 / BS512)).